The chain runs to 470 residues: Dihydrolipoyl dehydrogenase (470 aa).

Residues 39–47, Lys56, and Ala119 each bind FAD; that span reads EKGNLGGVC. A disulfide bond links Cys47 and Cys52. Residues 183–187, Glu206, and 271–274 each bind NAD(+); these read GGGYI and TVGR. Asp314 and Ala322 together coordinate FAD. The active-site Proton acceptor is His446.

Belongs to the class-I pyridine nucleotide-disulfide oxidoreductase family. Homodimer. Identified in a complex with PdhC. FAD serves as cofactor.

It localises to the cytoplasm. It catalyses the reaction N(6)-[(R)-dihydrolipoyl]-L-lysyl-[protein] + NAD(+) = N(6)-[(R)-lipoyl]-L-lysyl-[protein] + NADH + H(+). Lipoamide dehydrogenase is a component of the alpha-ketoacid dehydrogenase complexes. The protein is Dihydrolipoyl dehydrogenase (pdhD) of Geobacillus stearothermophilus (Bacillus stearothermophilus).